A 105-amino-acid chain; its full sequence is Large ribosomal subunit protein uL24 (105 aa).

Belongs to the universal ribosomal protein uL24 family. In terms of assembly, part of the 50S ribosomal subunit.

In terms of biological role, one of two assembly initiator proteins, it binds directly to the 5'-end of the 23S rRNA, where it nucleates assembly of the 50S subunit. Functionally, one of the proteins that surrounds the polypeptide exit tunnel on the outside of the subunit. The sequence is that of Large ribosomal subunit protein uL24 from Beijerinckia indica subsp. indica (strain ATCC 9039 / DSM 1715 / NCIMB 8712).